The following is a 341-amino-acid chain: Very-long-chain 3-oxoacyl-CoA reductase (341 aa).

A helical transmembrane segment spans residues 22-42 (AVTGFLLVGIASFAAPLISTI). NADP(+) contacts are provided by Leu-67, Asp-123, Asp-131, Asn-150, Tyr-217, Lys-221, Val-250, and Thr-252. Tyr-217 (proton donor) is an active-site residue. Lys-221 acts as the Lowers pKa of active site Tyr in catalysis.

Belongs to the short-chain dehydrogenases/reductases (SDR) family.

It localises to the endoplasmic reticulum membrane. It carries out the reaction a very-long-chain (3R)-3-hydroxyacyl-CoA + NADP(+) = a very-long-chain 3-oxoacyl-CoA + NADPH + H(+). Its pathway is lipid metabolism; fatty acid biosynthesis. Component of the microsomal membrane bound fatty acid elongation system, which produces the 26-carbon very long-chain fatty acids (VLCFA) from palmitate. Catalyzes the reduction of the 3-ketoacyl-CoA intermediate that is formed in each cycle of fatty acid elongation. VLCFAs serve as precursors for ceramide and sphingolipids. The chain is Very-long-chain 3-oxoacyl-CoA reductase from Pyrenophora tritici-repentis (strain Pt-1C-BFP) (Wheat tan spot fungus).